The chain runs to 243 residues: 1-(5-phosphoribosyl)-5-[(5-phosphoribosylamino)methylideneamino] imidazole-4-carboxamide isomerase (243 aa).

Residue aspartate 8 is the Proton acceptor of the active site. The Proton donor role is filled by aspartate 130.

It belongs to the HisA/HisF family.

It is found in the cytoplasm. It carries out the reaction 1-(5-phospho-beta-D-ribosyl)-5-[(5-phospho-beta-D-ribosylamino)methylideneamino]imidazole-4-carboxamide = 5-[(5-phospho-1-deoxy-D-ribulos-1-ylimino)methylamino]-1-(5-phospho-beta-D-ribosyl)imidazole-4-carboxamide. The protein operates within amino-acid biosynthesis; L-histidine biosynthesis; L-histidine from 5-phospho-alpha-D-ribose 1-diphosphate: step 4/9. The polypeptide is 1-(5-phosphoribosyl)-5-[(5-phosphoribosylamino)methylideneamino] imidazole-4-carboxamide isomerase (Ruthia magnifica subsp. Calyptogena magnifica).